Consider the following 232-residue polypeptide: DASH complex subunit DUO1 (232 aa).

Disordered stretches follow at residues 1-44 and 133-232; these read MADE…GGMR and ERRR…RGAK. Positions 128–171 form a coiled coil; it reads ELEAEERRRQEEVERRAAEAERRREEARRKAEEEERRRAAAAAA. Positions 133–165 are enriched in basic and acidic residues; that stretch reads ERRRQEEVERRAAEAERRREEARRKAEEEERRR. 2 stretches are compositionally biased toward low complexity: residues 167–183 and 191–213; these read AAAAAAAAPAGRSVGRG and GSGLTRGASSSASGSETTRTTSG.

It belongs to the DASH complex DUO1 family. Component of the DASH complex consisting of ASK1, DAD1, DAD2, DAD3, DAD4, DAM1, DUO1, HSK3, SPC19 and SPC34, with a stoichiometry of one copy of each subunit per complex. Multiple DASH complexes oligomerize to form a ring that encircles spindle microtubules and organizes the rod-like NDC80 complexes of the outer kinetochore. DASH complex oligomerization strengthens microtubule attachments. On cytoplasmic microtubules, DASH complexes appear to form patches instead of rings.

It is found in the nucleus. The protein localises to the cytoplasm. The protein resides in the cytoskeleton. It localises to the spindle pole. Its subcellular location is the chromosome. It is found in the centromere. The protein localises to the kinetochore. Functionally, component of the DASH complex that connects microtubules with kinetochores and couples microtubule depolymerisation to chromosome movement; it is involved in retrieving kinetochores to the spindle poles before their re-orientation on the spindle in early mitosis and allows microtubule depolymerization to pull chromosomes apart and resist detachment during anaphase. Kinetochores, consisting of a centromere-associated inner segment and a microtubule-contacting outer segment, play a crucial role in chromosome segregation by mediating the physical connection between centromeric DNA and microtubules. Kinetochores also serve as an input point for the spindle assembly checkpoint, which delays anaphase until all chromosomes have bioriented on the mitotic spindle. This is DASH complex subunit DUO1 from Chaetomium thermophilum (strain DSM 1495 / CBS 144.50 / IMI 039719) (Thermochaetoides thermophila).